The sequence spans 101 residues: Putative defensin-like protein 86 (101 aa).

Positions 1-27 (MAITKMSSLIILSLMMLTFIYIPMISG) are cleaved as a signal peptide. 4 cysteine pairs are disulfide-bonded: Cys-35/Cys-71, Cys-39/Cys-59, Cys-45/Cys-69, and Cys-49/Cys-70.

The protein belongs to the DEFL family.

It localises to the secreted. This chain is Putative defensin-like protein 86 (LCR82), found in Arabidopsis thaliana (Mouse-ear cress).